We begin with the raw amino-acid sequence, 89 residues long: Small ribosomal subunit protein uS15 (89 aa).

The protein belongs to the universal ribosomal protein uS15 family. In terms of assembly, part of the 30S ribosomal subunit. Forms a bridge to the 50S subunit in the 70S ribosome, contacting the 23S rRNA.

Functionally, one of the primary rRNA binding proteins, it binds directly to 16S rRNA where it helps nucleate assembly of the platform of the 30S subunit by binding and bridging several RNA helices of the 16S rRNA. Its function is as follows. Forms an intersubunit bridge (bridge B4) with the 23S rRNA of the 50S subunit in the ribosome. This chain is Small ribosomal subunit protein uS15, found in Xanthobacter autotrophicus (strain ATCC BAA-1158 / Py2).